Here is a 248-residue protein sequence, read N- to C-terminus: Proteasome subunit alpha type-3 (248 aa).

It belongs to the peptidase T1A family. As to quaternary structure, the 26S proteasome consists of a 20S proteasome core and two 19S regulatory subunits. The 20S proteasome core is composed of 28 subunits that are arranged in four stacked rings, resulting in a barrel-shaped structure. The two end rings are each formed by seven alpha subunits, and the two central rings are each formed by seven beta subunits. The catalytic chamber with the active sites is on the inside of the barrel.

The protein resides in the cytoplasm. The protein localises to the nucleus. The proteasome is a multicatalytic proteinase complex which is characterized by its ability to cleave peptides with Arg, Phe, Tyr, Leu, and Glu adjacent to the leaving group at neutral or slightly basic pH. The proteasome has an ATP-dependent proteolytic activity. In Dictyostelium discoideum (Social amoeba), this protein is Proteasome subunit alpha type-3 (psmA3).